The primary structure comprises 291 residues: Membrane protein insertase YidC (291 aa).

Positions 1–19 (MKKKALLPLLLGVMVFLAG) are cleaved as a signal peptide. Cys20 carries N-palmitoyl cysteine lipidation. The S-diacylglycerol cysteine moiety is linked to residue Cys20. The next 4 helical transmembrane spans lie at 56 to 76 (YGIAIIVLVLVIRIILLPFML), 134 to 154 (ALGCLPVLIQMPVVMGLYFVL), 170 to 190 (WFNLIHPDIWITIIAGVLYFI), and 211 to 231 (MIVSPIMIIWISLSSASALGL). The disordered stretch occupies residues 266-291 (FKENNSNSNKKGKNTQVVSKNNKKKK).

Belongs to the OXA1/ALB3/YidC family. Type 2 subfamily.

Its subcellular location is the cell membrane. In terms of biological role, required for the insertion and/or proper folding and/or complex formation of integral membrane proteins into the membrane. Involved in integration of membrane proteins that insert both dependently and independently of the Sec translocase complex, as well as at least some lipoproteins. In Staphylococcus haemolyticus (strain JCSC1435), this protein is Membrane protein insertase YidC.